Reading from the N-terminus, the 220-residue chain is 7-cyano-7-deazaguanine synthase (220 aa).

Isoleucine 7–alanine 17 is a binding site for ATP. Positions 187, 195, 198, and 201 each coordinate Zn(2+).

This sequence belongs to the QueC family. Zn(2+) is required as a cofactor.

The enzyme catalyses 7-carboxy-7-deazaguanine + NH4(+) + ATP = 7-cyano-7-deazaguanine + ADP + phosphate + H2O + H(+). It functions in the pathway purine metabolism; 7-cyano-7-deazaguanine biosynthesis. In terms of biological role, catalyzes the ATP-dependent conversion of 7-carboxy-7-deazaguanine (CDG) to 7-cyano-7-deazaguanine (preQ(0)). The protein is 7-cyano-7-deazaguanine synthase of Campylobacter hominis (strain ATCC BAA-381 / DSM 21671 / CCUG 45161 / LMG 19568 / NCTC 13146 / CH001A).